The sequence spans 396 residues: Phosphoglycerate kinase (396 aa).

Substrate is bound by residues 21–23, Arg-37, 60–63, Arg-121, and Arg-154; these read DFN and HLGR. ATP contacts are provided by residues Lys-205, Gly-296, Glu-327, and 353–356; that span reads GGDS.

The protein belongs to the phosphoglycerate kinase family. Monomer.

Its subcellular location is the cytoplasm. It carries out the reaction (2R)-3-phosphoglycerate + ATP = (2R)-3-phospho-glyceroyl phosphate + ADP. The protein operates within carbohydrate degradation; glycolysis; pyruvate from D-glyceraldehyde 3-phosphate: step 2/5. This is Phosphoglycerate kinase from Anaeromyxobacter sp. (strain Fw109-5).